Consider the following 333-residue polypeptide: Phenylalanine--tRNA ligase alpha subunit (333 aa).

Glutamate 254 serves as a coordination point for Mg(2+).

Belongs to the class-II aminoacyl-tRNA synthetase family. Phe-tRNA synthetase alpha subunit type 1 subfamily. Tetramer of two alpha and two beta subunits. The cofactor is Mg(2+).

The protein localises to the cytoplasm. It carries out the reaction tRNA(Phe) + L-phenylalanine + ATP = L-phenylalanyl-tRNA(Phe) + AMP + diphosphate + H(+). This Xylella fastidiosa (strain M12) protein is Phenylalanine--tRNA ligase alpha subunit.